Reading from the N-terminus, the 123-residue chain is Small ribosomal subunit protein uS13 (123 aa).

Residues 93-123 form a disordered region; that stretch reads HRKGLPVRGQNTKNNARTRKGPAKAIAGKKK. The span at 108 to 123 shows a compositional bias: basic residues; it reads ARTRKGPAKAIAGKKK.

Belongs to the universal ribosomal protein uS13 family. As to quaternary structure, part of the 30S ribosomal subunit. Forms a loose heterodimer with protein S19. Forms two bridges to the 50S subunit in the 70S ribosome.

Its function is as follows. Located at the top of the head of the 30S subunit, it contacts several helices of the 16S rRNA. In the 70S ribosome it contacts the 23S rRNA (bridge B1a) and protein L5 of the 50S subunit (bridge B1b), connecting the 2 subunits; these bridges are implicated in subunit movement. Contacts the tRNAs in the A and P-sites. The polypeptide is Small ribosomal subunit protein uS13 (Leuconostoc mesenteroides subsp. mesenteroides (strain ATCC 8293 / DSM 20343 / BCRC 11652 / CCM 1803 / JCM 6124 / NCDO 523 / NBRC 100496 / NCIMB 8023 / NCTC 12954 / NRRL B-1118 / 37Y)).